The sequence spans 416 residues: MAILGIVAEYNPFHNGHLYLLEKSRQQGDFSATVVVMSGNFLQRGEPAFCDKWARAEMALTAGVDLLIELPFCFATRSAYYFAKGAVQLLQRSGVVTHLAFGSESGQLSQLQEIAGILAHEPESYKTALKKRLSQGWSFPLARSSALQEYMGGEKKQLQEILPGPNNILALEYLRVIEEEGIPLLPLTIPRQGSSFHSSDLSPYSSARAIRQALYHNLDWEKITNSISPATEKILQREIALGRAPIGPDSLEQAIMVNLRLVSTDYLREIYEVSEGLEFRIKEATNSCGTLEELRQFIKSKRYSLTRINRTLLYTLFALSKNQVELYDQHGPQYLHILGFSAKGQEILQKIKIKSKLKIFSRGSEMKQARDKNPGTALAEMIKLDCQATDVYSLLFPNPATRRAGRDFTTSPVPGT.

ATP contacts are provided by residues 7 to 20 (VAEYNPFHNGHLYL), glycine 102, asparagine 166, and arginine 191.

Belongs to the TmcAL family.

The protein resides in the cytoplasm. The enzyme catalyses cytidine(34) in elongator tRNA(Met) + acetate + ATP = N(4)-acetylcytidine(34) in elongator tRNA(Met) + AMP + diphosphate. Catalyzes the formation of N(4)-acetylcytidine (ac(4)C) at the wobble position of elongator tRNA(Met), using acetate and ATP as substrates. First activates an acetate ion to form acetyladenylate (Ac-AMP) and then transfers the acetyl group to tRNA to form ac(4)C34. The protein is tRNA(Met) cytidine acetate ligase of Syntrophomonas wolfei subsp. wolfei (strain DSM 2245B / Goettingen).